Reading from the N-terminus, the 810-residue chain is Plasminogen (810 aa).

A signal peptide spans 1–19 (MEHKEVVLLLLLFLKSGQG). The PAN domain occupies 20 to 98 (EPLDDYVNTQ…RDVVLFEKKV (79 aa)). 12 cysteine pairs are disulfide-bonded: Cys-49–Cys-73, Cys-53–Cys-61, Cys-103–Cys-181, Cys-124–Cys-164, Cys-152–Cys-176, Cys-185–Cys-262, Cys-188–Cys-316, Cys-206–Cys-245, Cys-234–Cys-257, Cys-275–Cys-352, Cys-296–Cys-335, and Cys-324–Cys-347. Kringle domains follow at residues 103–181 (CKTG…IPEC), 184–262 (ACMH…IPRC), and 275–352 (CLKG…IPSC). The segment at 126-145 (KWSSTSPHRPRFSPATHPSE) is disordered. Residues Arg-136, Asp-158, and Arg-172 each coordinate L-lysine. The O-linked (GalNAc...) threonine glycan is linked to Thr-365. 9 cysteine pairs are disulfide-bonded: Cys-377-Cys-454, Cys-398-Cys-437, Cys-426-Cys-449, Cys-481-Cys-560, Cys-502-Cys-543, Cys-531-Cys-555, Cys-567-Cys-685, Cys-577-Cys-585, and Cys-607-Cys-623. Kringle domains follow at residues 377–454 (CYHG…LKKC) and 481–560 (CMFG…VPQC). 2 residues coordinate L-lysine: Asp-432 and Arg-445. One can recognise a Peptidase S1 domain in the interval 581–808 (VVGGCVANAH…FVTWIEGVMR (228 aa)). The residue at position 597 (Ser-597) is a Phosphoserine. Residues His-622 and Asp-665 each act as charge relay system in the active site. The residue at position 688 (Ser-688) is a Phosphoserine. 3 disulfide bridges follow: Cys-699–Cys-766, Cys-729–Cys-745, and Cys-756–Cys-784. The Charge relay system role is filled by Ser-760.

It belongs to the peptidase S1 family. Plasminogen subfamily. In terms of assembly, interacts with CSPG4 and AMOT. Interacts (via the Kringle domains) with HRG; the interaction tethers PLG to the cell surface and enhances its activation. Interacts (via Kringle 4 domain) with ADA; the interaction stimulates PLG activation when in complex with DPP4. Angiostatin: Interacts with ATP5F1A; the interaction inhibits most of the angiogenic effects of angiostatin. In the presence of the inhibitor, the activation involves only cleavage after Arg-580, yielding two chains held together by two disulfide bonds. In the absence of the inhibitor, the activation involves additionally the removal of the activation peptide.

It localises to the secreted. The catalysed reaction is Preferential cleavage: Lys-|-Xaa &gt; Arg-|-Xaa, higher selectivity than trypsin. Converts fibrin into soluble products.. Its activity is regulated as follows. Converted into plasmin by plasminogen activators, both plasminogen and its activator being bound to fibrin. Activated with catalytic amounts of streptokinase. Functionally, plasmin dissolves the fibrin of blood clots and acts as a proteolytic factor in a variety of other processes including embryonic development, tissue remodeling, tumor invasion, and inflammation. In ovulation, weakens the walls of the Graafian follicle. It activates the urokinase-type plasminogen activator, collagenases and several complement zymogens, such as C1, C4 and C5. Cleavage of fibronectin and laminin leads to cell detachment and apoptosis. Also cleaves fibrin, thrombospondin and von Willebrand factor. Its role in tissue remodeling and tumor invasion may be modulated by CSPG4. Binds to cells. The chain is Plasminogen (PLG) from Pongo abelii (Sumatran orangutan).